The primary structure comprises 145 residues: Hemoglobin subunit beta (145 aa).

The Globin domain occupies 1 to 145 (MLTAEEKAAV…VANALAHRYH (145 aa)). Thr-11 is modified (phosphothreonine). Ser-43 carries the phosphoserine modification. N6-acetyllysine is present on Lys-58. A heme b-binding site is contributed by His-62. Residue Lys-81 is modified to N6-acetyllysine. His-91 lines the heme b pocket. Cys-92 carries the S-nitrosocysteine modification.

It belongs to the globin family. As to quaternary structure, heterotetramer of two alpha chains and two beta chains. In terms of tissue distribution, red blood cells.

Involved in oxygen transport from the lung to the various peripheral tissues. The sequence is that of Hemoglobin subunit beta (HBB) from Bos gaurus frontalis (Domestic gayal).